Reading from the N-terminus, the 685-residue chain is Augmin complex subunit dgt5 (685 aa).

Coiled-coil stretches lie at residues 87–165 (LQRY…NKIQ) and 342–379 (NMRN…DLKL).

Component of the augmin complex composed of dgt2, dgt3, dgt4, dgt5, dgt6, msd1, msd5 and wac. The complex interacts directly or indirectly with microtubules and is required for centrosome-independent generation of spindle microtubules.

The protein localises to the cytoplasm. It is found in the cytoskeleton. It localises to the spindle. The protein resides in the chromosome. Its subcellular location is the centromere. The protein localises to the kinetochore. It is found in the microtubule organizing center. It localises to the centrosome. Functionally, as part of the augmin complex, plays a role in centrosome-independent generation of spindle microtubules. The complex is required for mitotic spindle assembly through its involvement in localizing gamma-tubulin to spindle microtubules. The polypeptide is Augmin complex subunit dgt5 (Drosophila melanogaster (Fruit fly)).